The chain runs to 211 residues: Ras-related protein Rab-38 (211 aa).

Residues Gly19, Val20, Gly21, Lys22, Thr23, Ser24, Ser35, Ser36, Tyr38, and Thr41 each coordinate GTP. Residue Thr23 coordinates Mg(2+). Residues 32–46 (QNFSSHYRATIGVDF) carry the Switch 1 motif. Residues Thr41 and Asp65 each coordinate Mg(2+). Residues Gly68, Lys128, Asp130, Ala160, and Lys161 each coordinate GTP. Positions 68 to 81 (GQERFGNMTRVYYR) match the Switch 2 motif. A lipid anchor (S-palmitoyl cysteine) is attached at Cys205. A lipid anchor (S-geranylgeranyl cysteine) is attached at Cys208.

The protein belongs to the small GTPase superfamily. Rab family. As to quaternary structure, interacts with ANKRD27. It depends on Mg(2+) as a cofactor.

The protein resides in the cell membrane. Its subcellular location is the cytoplasmic vesicle. The protein localises to the phagosome. It is found in the phagosome membrane. It localises to the melanosome. The protein resides in the melanosome membrane. It catalyses the reaction GTP + H2O = GDP + phosphate + H(+). Regulated by guanine nucleotide exchange factors (GEFs) including the BLOC-3 complex composed of HPS1 and HPS4 which promote the exchange of bound GDP for free GTP. Regulated by GTPase activating proteins (GAPs) including SGSM2 which increase the GTP hydrolysis activity. Inhibited by GDP dissociation inhibitors (GDIs). The small GTPases Rab are key regulators of intracellular membrane trafficking, from the formation of transport vesicles to their fusion with membranes. Rabs cycle between an inactive GDP-bound form and an active GTP-bound form that is able to recruit to membranes different sets of downstream effectors directly responsible for vesicle formation, movement, tethering and fusion. RAB38 plays a role in the maturation of phagosomes that engulf pathogens, such as S.aureus and Mycobacterium. May be involved in melanosomal transport and docking. Involved in the proper sorting of TYRP1. Involved in peripheral melanosomal distribution of TYRP1 in melanocytes; the function, which probably is implicating vesicle-trafficking, includes cooperation with ANKRD27 and VAMP7. Plays an important role in the control of melanin production and melanosome biogenesis. In concert with RAB32, regulates the proper trafficking of melanogenic enzymes TYR, TYRP1 and DCT/TYRP2 to melanosomes in melanocytes. This is Ras-related protein Rab-38 from Mus musculus (Mouse).